A 112-amino-acid chain; its full sequence is Large ribosomal subunit protein eL30 (112 aa).

The protein belongs to the eukaryotic ribosomal protein eL30 family.

The chain is Large ribosomal subunit protein eL30 (RPL30) from Zea mays (Maize).